The chain runs to 153 residues: Large ribosomal subunit protein uL15 (153 aa).

A disordered region spans residues 21–41 (RGIGSGKGKTGGRGIKGQKSR). A compositionally biased stretch (gly residues) spans 23–35 (IGSGKGKTGGRGI).

The protein belongs to the universal ribosomal protein uL15 family. As to quaternary structure, part of the 50S ribosomal subunit.

Binds to the 23S rRNA. In Rickettsia rickettsii (strain Iowa), this protein is Large ribosomal subunit protein uL15.